Consider the following 164-residue polypeptide: Urease subunit beta (164 aa).

Polar residues-rich tracts occupy residues 1-10 and 20-32; these read MSTKTNSTKA and TNRGTKSSAGYSE. The disordered stretch occupies residues 1–32; the sequence is MSTKTNSTKATSEKTDSLKTNRGTKSSAGYSE.

It belongs to the urease beta subunit family. As to quaternary structure, heterotrimer of UreA (gamma), UreB (beta) and UreC (alpha) subunits. Three heterotrimers associate to form the active enzyme.

It is found in the cytoplasm. The enzyme catalyses urea + 2 H2O + H(+) = hydrogencarbonate + 2 NH4(+). Its pathway is nitrogen metabolism; urea degradation; CO(2) and NH(3) from urea (urease route): step 1/1. The protein is Urease subunit beta of Yersinia enterocolitica serotype O:8 / biotype 1B (strain NCTC 13174 / 8081).